The following is a 273-amino-acid chain: 3-methyl-2-oxobutanoate hydroxymethyltransferase 1 (273 aa).

2 residues coordinate Mg(2+): Asp49 and Asp88. Residues 49 to 50, Asp88, and Lys118 contribute to the 3-methyl-2-oxobutanoate site; that span reads DS. Glu120 serves as a coordination point for Mg(2+). Residue Glu187 is the Proton acceptor of the active site.

This sequence belongs to the PanB family. As to quaternary structure, homodecamer; pentamer of dimers. It depends on Mg(2+) as a cofactor.

It is found in the cytoplasm. It catalyses the reaction 3-methyl-2-oxobutanoate + (6R)-5,10-methylene-5,6,7,8-tetrahydrofolate + H2O = 2-dehydropantoate + (6S)-5,6,7,8-tetrahydrofolate. Its pathway is cofactor biosynthesis; (R)-pantothenate biosynthesis; (R)-pantoate from 3-methyl-2-oxobutanoate: step 1/2. In terms of biological role, catalyzes the reversible reaction in which hydroxymethyl group from 5,10-methylenetetrahydrofolate is transferred onto alpha-ketoisovalerate to form ketopantoate. The protein is 3-methyl-2-oxobutanoate hydroxymethyltransferase 1 of Pseudomonas aeruginosa (strain UCBPP-PA14).